The chain runs to 709 residues: Polyribonucleotide nucleotidyltransferase (709 aa).

Residues D490 and D496 each contribute to the Mg(2+) site. Positions 557–616 constitute a KH domain; that stretch reads PKVITMRVLPEKIPVIIGPSGKNIKKIIDETGVKIDLDQEGLVRIYAVDGESADKAKEMI. In terms of domain architecture, S1 motif spans 626-694; the sequence is GEVYMGKVTR…EMGRAKVSLK (69 aa).

This sequence belongs to the polyribonucleotide nucleotidyltransferase family. Requires Mg(2+) as cofactor.

Its subcellular location is the cytoplasm. It carries out the reaction RNA(n+1) + phosphate = RNA(n) + a ribonucleoside 5'-diphosphate. In terms of biological role, involved in mRNA degradation. Catalyzes the phosphorolysis of single-stranded polyribonucleotides processively in the 3'- to 5'-direction. The polypeptide is Polyribonucleotide nucleotidyltransferase (Persephonella marina (strain DSM 14350 / EX-H1)).